Here is a 299-residue protein sequence, read N- to C-terminus: GTPase Era (299 aa).

Positions 9–177 (RSGSVAVIGR…VGDLLKLVPE (169 aa)) constitute an Era-type G domain. A G1 region spans residues 17–24 (GRPNVGKS). 17–24 (GRPNVGKS) contributes to the GTP binding site. Positions 43-47 (QTTRH) are G2. Residues 64-67 (DTPG) form a G3 region. GTP-binding positions include 64-68 (DTPGL) and 126-129 (NKVD). A G4 region spans residues 126–129 (NKVD). Positions 156–158 (VSA) are G5. The KH type-2 domain occupies 200 to 284 (VREQLMRQLG…FLETWVRVRE (85 aa)).

The protein belongs to the TRAFAC class TrmE-Era-EngA-EngB-Septin-like GTPase superfamily. Era GTPase family. In terms of assembly, monomer.

It is found in the cytoplasm. The protein resides in the cell inner membrane. An essential GTPase that binds both GDP and GTP, with rapid nucleotide exchange. Plays a role in 16S rRNA processing and 30S ribosomal subunit biogenesis and possibly also in cell cycle regulation and energy metabolism. The chain is GTPase Era from Xanthomonas axonopodis pv. citri (strain 306).